The sequence spans 420 residues: F420-non-reducing hydrogenase vhu subunit A (420 aa).

Cysteine 61 and cysteine 64 together coordinate Ni(2+).

Belongs to the [NiFe]/[NiFeSe] hydrogenase large subunit family. As to quaternary structure, the F420-non-reducing hydrogenase vhu is composed of four subunits; VhuA, VhuD, VhuG and VhuU. Ni(2+) serves as cofactor.

The chain is F420-non-reducing hydrogenase vhu subunit A (vhuA) from Methanococcus voltae.